The sequence spans 188 residues: dCTP deaminase (188 aa).

DCTP is bound by residues 111–116 (KSTYAR), 135–137 (TLE), Q156, Y170, and Q180. The active-site Proton donor/acceptor is the E137.

It belongs to the dCTP deaminase family. As to quaternary structure, homotrimer.

The catalysed reaction is dCTP + H2O + H(+) = dUTP + NH4(+). The protein operates within pyrimidine metabolism; dUMP biosynthesis; dUMP from dCTP (dUTP route): step 1/2. Functionally, catalyzes the deamination of dCTP to dUTP. The protein is dCTP deaminase of Neisseria meningitidis serogroup C / serotype 2a (strain ATCC 700532 / DSM 15464 / FAM18).